Reading from the N-terminus, the 322-residue chain is DNA repair and recombination protein RadA (322 aa).

105–112 (GMYGSGKT) serves as a coordination point for ATP.

This sequence belongs to the eukaryotic RecA-like protein family.

Involved in DNA repair and in homologous recombination. Binds and assemble on single-stranded DNA to form a nucleoprotein filament. Hydrolyzes ATP in a ssDNA-dependent manner and promotes DNA strand exchange between homologous DNA molecules. This is DNA repair and recombination protein RadA from Methanococcus maripaludis (strain C6 / ATCC BAA-1332).